The sequence spans 384 residues: Probable E3 ubiquitin-protein ligase rnf113 (384 aa).

Residues 1 to 11 (MDLFRKPKKRN) are compositionally biased toward basic residues. The disordered stretch occupies residues 1 to 96 (MDLFRKPKKR…GPSGPRDQGA (96 aa)). Residues 42 to 52 (PMVQSTKQLDA) show a composition bias toward polar residues. Residues 60–71 (SSDDSDDSDDNQ) show a composition bias toward acidic residues. The segment at 175-203 (DFAPDICKDYKETGFCTFGDSCKFVHDRS) adopts a C3H1-type zinc-finger fold. The segment at 241 to 279 (CFICGNPFVDPIVTKCKHYFCTGCALKSFQKSSKCPICQ) adopts an RING-type zinc-finger fold. Residues 299-384 (KKQQQKQEAE…ESDDDDAEKD (86 aa)) form a disordered region. Composition is skewed to basic and acidic residues over residues 303-312 (QKQEAEKQEE) and 320-334 (EKPHECDDHHHHDHE). Residues 351 to 384 (EKSDEEQEIMMEDVEGLEGGENDSESDDDDAEKD) show a composition bias toward acidic residues.

The catalysed reaction is S-ubiquitinyl-[E2 ubiquitin-conjugating enzyme]-L-cysteine + [acceptor protein]-L-lysine = [E2 ubiquitin-conjugating enzyme]-L-cysteine + N(6)-ubiquitinyl-[acceptor protein]-L-lysine.. It participates in protein modification; protein ubiquitination. Functionally, may function as E3 ubiquitin-protein ligase that catalyzes the transfer of ubiquitin onto target proteins. May play a role in DNA repair via its role in the synthesis of 'Lys-63'-linked polyubiquitin chains that recruit proteins involved in repair to sites of DNA damage by alkylating agents. The chain is Probable E3 ubiquitin-protein ligase rnf113 (rnf-113) from Caenorhabditis elegans.